Reading from the N-terminus, the 299-residue chain is tRNA dimethylallyltransferase (299 aa).

8 to 15 (GPTASGKT) contacts ATP. 10-15 (TASGKT) provides a ligand contact to substrate. The tract at residues 33–36 (DSQQ) is interaction with substrate tRNA.

This sequence belongs to the IPP transferase family. Monomer. The cofactor is Mg(2+).

The enzyme catalyses adenosine(37) in tRNA + dimethylallyl diphosphate = N(6)-dimethylallyladenosine(37) in tRNA + diphosphate. Functionally, catalyzes the transfer of a dimethylallyl group onto the adenine at position 37 in tRNAs that read codons beginning with uridine, leading to the formation of N6-(dimethylallyl)adenosine (i(6)A). This Anaeromyxobacter dehalogenans (strain 2CP-C) protein is tRNA dimethylallyltransferase.